We begin with the raw amino-acid sequence, 771 residues long: Putative 8-amino-7-oxononanoate synthase 2 (771 aa).

The segment at 1-418 (MPTGLGYDFL…TVKAAELGEI (418 aa)) is unknown. Arg-407 is a substrate binding site. Positions 419–771 (VLLGTNSYLG…EDLTPQGAAL (353 aa)) are KAPA synthase. 485–486 (GY) provides a ligand contact to pyridoxal 5'-phosphate. His-510 contributes to the substrate binding site. Pyridoxal 5'-phosphate-binding positions include Ser-556 and 581 to 584 (DESH). Lys-615 bears the N6-(pyridoxal phosphate)lysine mark.

This sequence in the C-terminal section; belongs to the class-II pyridoxal-phosphate-dependent aminotransferase family. BioF subfamily. It depends on pyridoxal 5'-phosphate as a cofactor.

The catalysed reaction is 6-carboxyhexanoyl-[ACP] + L-alanine + H(+) = (8S)-8-amino-7-oxononanoate + holo-[ACP] + CO2. In terms of biological role, catalyzes the decarboxylative condensation of pimeloyl-[acyl-carrier protein] and L-alanine to produce 8-amino-7-oxononanoate (AON), [acyl-carrier protein], and carbon dioxide. In Mycobacterium tuberculosis (strain CDC 1551 / Oshkosh), this protein is Putative 8-amino-7-oxononanoate synthase 2 (bioF2).